Reading from the N-terminus, the 861-residue chain is Leucine--tRNA ligase (861 aa).

The 'HIGH' region motif lies at 42 to 52; sequence PYPSGRLHMGH. Positions 619-623 match the 'KMSKS' region motif; that stretch reads KMSKS. An ATP-binding site is contributed by lysine 622.

The protein belongs to the class-I aminoacyl-tRNA synthetase family.

The protein localises to the cytoplasm. The enzyme catalyses tRNA(Leu) + L-leucine + ATP = L-leucyl-tRNA(Leu) + AMP + diphosphate. This Haemophilus influenzae (strain ATCC 51907 / DSM 11121 / KW20 / Rd) protein is Leucine--tRNA ligase.